A 215-amino-acid polypeptide reads, in one-letter code: Orotate phosphoribosyltransferase (215 aa).

Position 26 (Lys-26) interacts with 5-phospho-alpha-D-ribose 1-diphosphate. 34–35 serves as a coordination point for orotate; sequence FF. Residues 72 to 73, Arg-99, Lys-100, Lys-103, His-105, and 125 to 133 contribute to the 5-phospho-alpha-D-ribose 1-diphosphate site; these read YK and DDVISSGIS. 2 residues coordinate orotate: Ser-129 and Arg-157.

Belongs to the purine/pyrimidine phosphoribosyltransferase family. PyrE subfamily. In terms of assembly, homodimer. The cofactor is Mg(2+).

The enzyme catalyses orotidine 5'-phosphate + diphosphate = orotate + 5-phospho-alpha-D-ribose 1-diphosphate. Its pathway is pyrimidine metabolism; UMP biosynthesis via de novo pathway; UMP from orotate: step 1/2. Its function is as follows. Catalyzes the transfer of a ribosyl phosphate group from 5-phosphoribose 1-diphosphate to orotate, leading to the formation of orotidine monophosphate (OMP). This is Orotate phosphoribosyltransferase from Halorhodospira halophila (strain DSM 244 / SL1) (Ectothiorhodospira halophila (strain DSM 244 / SL1)).